The chain runs to 124 residues: Ribonuclease pancreatic (124 aa).

Substrate is bound by residues lysine 7 and arginine 10. Catalysis depends on histidine 12, which acts as the Proton acceptor. 4 cysteine pairs are disulfide-bonded: cysteine 26/cysteine 84, cysteine 40/cysteine 95, cysteine 58/cysteine 110, and cysteine 65/cysteine 72. Asparagine 34 is a glycosylation site (N-linked (GlcNAc...) asparagine). Residues 41 to 45 (KPVNT), lysine 66, and arginine 85 contribute to the substrate site. Histidine 119 serves as the catalytic Proton donor.

Belongs to the pancreatic ribonuclease family. In terms of assembly, monomer. Interacts with and forms tight 1:1 complexes with RNH1. Dimerization of two such complexes may occur. Interaction with RNH1 inhibits this protein. In terms of tissue distribution, pancreas.

The protein localises to the secreted. The enzyme catalyses an [RNA] containing cytidine + H2O = an [RNA]-3'-cytidine-3'-phosphate + a 5'-hydroxy-ribonucleotide-3'-[RNA].. It catalyses the reaction an [RNA] containing uridine + H2O = an [RNA]-3'-uridine-3'-phosphate + a 5'-hydroxy-ribonucleotide-3'-[RNA].. Its function is as follows. Endonuclease that catalyzes the cleavage of RNA on the 3' side of pyrimidine nucleotides. Acts on single-stranded and double-stranded RNA. In Mesocricetus auratus (Golden hamster), this protein is Ribonuclease pancreatic (RNASE1).